The following is a 122-amino-acid chain: Flagellar protein FliT (122 aa).

The interval 1–50 is required for homodimerization; that stretch reads MTSTVEFINRWQRIALLSQSLLELAQRGEWELLLQQEVSYLQSIETVMEK. Residues 60–98 are fliD binding; sequence IQDMVAGYIKQTLDNEQRLKGLLQQRLDELSGLIGQSTR.

It belongs to the FliT family. In terms of assembly, homodimer. Interacts with FliD and FlhC.

The protein localises to the cytoplasm. It localises to the cytosol. Its function is as follows. Dual-function protein that regulates the transcription of class 2 flagellar operons and that also acts as an export chaperone for the filament-capping protein FliD. As a transcriptional regulator, acts as an anti-FlhDC factor; it directly binds FlhC, thus inhibiting the binding of the FlhC/FlhD complex to class 2 promoters, resulting in decreased expression of class 2 flagellar operons. As a chaperone, effects FliD transition to the membrane by preventing its premature polymerization, and by directing it to the export apparatus. The sequence is that of Flagellar protein FliT from Salmonella arizonae (strain ATCC BAA-731 / CDC346-86 / RSK2980).